A 42-amino-acid chain; its full sequence is Photosystem I reaction center subunit IX (42 aa).

Residues 8 to 28 (YLSTAPVLFTVWLSFTASFII) form a helical membrane-spanning segment.

Belongs to the PsaJ family.

It is found in the plastid. The protein localises to the chloroplast thylakoid membrane. Its function is as follows. May help in the organization of the PsaE and PsaF subunits. The chain is Photosystem I reaction center subunit IX from Rhodomonas salina (Cryptomonas salina).